Reading from the N-terminus, the 146-residue chain is Sperm surface protein Sp17 (146 aa).

A compositionally biased stretch (basic and acidic residues) spans 76-88 (EHESEKCEAEEKS). The disordered stretch occupies residues 76 to 109 (EHESEKCEAEEKSQSVTEEETPVLTIDSEDDKDK). Residues 92 to 108 (TEEETPVLTIDSEDDKD) show a composition bias toward acidic residues. One can recognise an IQ domain in the interval 110-139 (EEMAALKIQAAFRGHLAREDVKKIRTNKAE).

As to quaternary structure, homodimer. May interact with ROPN1. The N-terminus is blocked. As to expression, testis- and sperm-specific.

The protein resides in the membrane. In terms of biological role, sperm surface zona pellucida binding protein. Helps to bind spermatozoa to the zona pellucida with high affinity. Might function in binding zona pellucida and carbohydrates. The polypeptide is Sperm surface protein Sp17 (SPA17) (Oryctolagus cuniculus (Rabbit)).